Here is a 416-residue protein sequence, read N- to C-terminus: Adenosylhomocysteinase (416 aa).

Residues threonine 55, aspartate 126, and glutamate 151 each contribute to the substrate site. Threonine 152–threonine 154 contributes to the NAD(+) binding site. 2 residues coordinate substrate: lysine 181 and aspartate 185. Residues asparagine 186, glycine 215–glycine 220, glutamate 238, asparagine 273, alanine 294–histidine 296, and asparagine 341 contribute to the NAD(+) site.

It belongs to the adenosylhomocysteinase family. NAD(+) is required as a cofactor.

Its subcellular location is the cytoplasm. The catalysed reaction is S-adenosyl-L-homocysteine + H2O = L-homocysteine + adenosine. It participates in amino-acid biosynthesis; L-homocysteine biosynthesis; L-homocysteine from S-adenosyl-L-homocysteine: step 1/1. May play a key role in the regulation of the intracellular concentration of adenosylhomocysteine. The polypeptide is Adenosylhomocysteinase (Aeropyrum pernix (strain ATCC 700893 / DSM 11879 / JCM 9820 / NBRC 100138 / K1)).